Reading from the N-terminus, the 160-residue chain is Putative pre-16S rRNA nuclease (160 aa).

The protein belongs to the YqgF nuclease family.

It localises to the cytoplasm. Its function is as follows. Could be a nuclease involved in processing of the 5'-end of pre-16S rRNA. This Gluconobacter oxydans (strain 621H) (Gluconobacter suboxydans) protein is Putative pre-16S rRNA nuclease.